Consider the following 273-residue polypeptide: Outer surface protein A (273 aa).

Positions 1 to 16 (MKKYLLGIGLILALIA) are cleaved as a signal peptide. C17 carries N-palmitoyl cysteine lipidation. C17 carries the S-diacylglycerol cysteine lipid modification.

The protein belongs to the OspA lipoprotein family.

Its subcellular location is the cell outer membrane. The protein resides in the cell surface. This Borreliella burgdorferi (Lyme disease spirochete) protein is Outer surface protein A.